The sequence spans 440 residues: Transposon Ty1-DR3 Gag polyprotein (440 aa).

3 stretches are compositionally biased toward polar residues: residues 1 to 10, 48 to 60, and 127 to 152; these read MESQQLSNYP, TKAN…TPAS, and QSQF…GNTF. 3 disordered regions span residues 1–93, 126–173, and 352–440; these read MESQ…MMTQ, PQSQ…RPPP, and GSRN…PETY. Positions 153-165 are enriched in low complexity; that stretch reads TDSSSADSDMTST. The RNA-binding stretch occupies residues 299–401; the sequence is NNGIHINNKV…NSKSKTARAH (103 aa). Residues 402–428 show a composition bias toward polar residues; that stretch reads NVSTSINSPSTDNDSISKSTTEPIQLN. At Ser-416 the chain carries Phosphoserine. The segment covering 429-440 has biased composition (basic and acidic residues); that stretch reads NKHDLHLRPETY.

Homotrimer.

The protein localises to the cytoplasm. Capsid protein (CA) is the structural component of the virus-like particle (VLP), forming the shell that encapsulates the retrotransposons dimeric RNA genome. The particles are assembled from trimer-clustered units and there are holes in the capsid shells that allow for the diffusion of macromolecules. CA also has nucleocapsid-like chaperone activity, promoting primer tRNA(i)-Met annealing to the multipartite primer-binding site (PBS), dimerization of Ty1 RNA and initiation of reverse transcription. The sequence is that of Transposon Ty1-DR3 Gag polyprotein (TY1A-DR3) from Saccharomyces cerevisiae (strain ATCC 204508 / S288c) (Baker's yeast).